The sequence spans 438 residues: Adenosylhomocysteinase (438 aa).

Positions 64, 139, and 164 each coordinate substrate. 165-167 (TTT) is a binding site for NAD(+). Residues Lys194 and Asp198 each contribute to the substrate site. Residues Asn199, 228–233 (GYGDVG), Glu251, Asn286, 307–309 (IGH), and Asn352 contribute to the NAD(+) site.

This sequence belongs to the adenosylhomocysteinase family. NAD(+) serves as cofactor.

The protein localises to the cytoplasm. It carries out the reaction S-adenosyl-L-homocysteine + H2O = L-homocysteine + adenosine. It participates in amino-acid biosynthesis; L-homocysteine biosynthesis; L-homocysteine from S-adenosyl-L-homocysteine: step 1/1. In terms of biological role, may play a key role in the regulation of the intracellular concentration of adenosylhomocysteine. The sequence is that of Adenosylhomocysteinase from Coxiella burnetii (strain RSA 493 / Nine Mile phase I).